We begin with the raw amino-acid sequence, 223 residues long: UPF0502 protein Sde_2426 (223 aa).

It belongs to the UPF0502 family.

This chain is UPF0502 protein Sde_2426, found in Saccharophagus degradans (strain 2-40 / ATCC 43961 / DSM 17024).